The primary structure comprises 309 residues: uncharacterized protein (309 aa).

The 60-residue stretch at 1 to 60 folds into the HTH lysR-type domain; it reads MKPLLDVLMILDALEKEGSFAAASAKLYKTPSALSYTVHKLESDLNIQLLDRSGHRAKFT. A DNA-binding region (H-T-H motif) is located at residues 20–39; sequence FAAASAKLYKTPSALSYTVH.

It belongs to the LysR transcriptional regulatory family.

This is an uncharacterized protein from Escherichia coli (strain K12).